The following is a 630-amino-acid chain: tRNA uridine 5-carboxymethylaminomethyl modification enzyme MnmG (630 aa).

13 to 18 contributes to the FAD binding site; the sequence is GGGHAG. 273–287 provides a ligand contact to NAD(+); the sequence is GPRYCPSIEDKIHRF.

Belongs to the MnmG family. As to quaternary structure, homodimer. Heterotetramer of two MnmE and two MnmG subunits. FAD serves as cofactor.

It localises to the cytoplasm. Functionally, NAD-binding protein involved in the addition of a carboxymethylaminomethyl (cmnm) group at the wobble position (U34) of certain tRNAs, forming tRNA-cmnm(5)s(2)U34. The chain is tRNA uridine 5-carboxymethylaminomethyl modification enzyme MnmG from Pseudomonas putida (strain W619).